The primary structure comprises 344 residues: 4-dimethylallyltryptophan N-methyltransferase easF (344 aa).

It belongs to the methyltransferase superfamily. As to quaternary structure, homodimer.

The enzyme catalyses 4-(3-methylbut-2-enyl)-L-tryptophan + S-adenosyl-L-methionine = 4-(3-methylbut-2-enyl)-L-abrine + S-adenosyl-L-homocysteine + H(+). Its pathway is alkaloid biosynthesis; ergot alkaloid biosynthesis. 4-dimethylallyltryptophan N-methyltransferase; part of the gene cluster that mediates the biosynthesis of fungal ergot alkaloid ergovaline, the predominant ergopeptine product in E.festucae var. lolii. DmaW catalyzes the first step of ergot alkaloid biosynthesis by condensing dimethylallyl diphosphate (DMAP) and tryptophan to form 4-dimethylallyl-L-tryptophan. The second step is catalyzed by the methyltransferase easF that methylates 4-dimethylallyl-L-tryptophan in the presence of S-adenosyl-L-methionine, resulting in the formation of 4-dimethylallyl-L-abrine. The catalase easC and the FAD-dependent oxidoreductase easE then transform 4-dimethylallyl-L-abrine to chanoclavine-I which is further oxidized by easD in the presence of NAD(+), resulting in the formation of chanoclavine-I aldehyde. Agroclavine dehydrogenase easG then mediates the conversion of chanoclavine-I aldehyde to agroclavine via a non-enzymatic adduct reaction: the substrate is an iminium intermediate that is formed spontaneously from chanoclavine-I aldehyde in the presence of glutathione. The presence of easA is not required to complete this reaction. Further conversion of agroclavine to paspalic acid is a two-step process involving oxidation of agroclavine to elymoclavine and of elymoclavine to paspalic acid, the second step being performed by the elymoclavine oxidase cloA. Paspalic acid is then further converted to D-lysergic acid. Ergovaline is assembled from D-lysergic acid and three different amino acids by the D-lysergyl-peptide-synthetase composed of a monomudular (lpsB) and a trimodular (lpsA) nonribosomal peptide synthetase subunit. The chain is 4-dimethylallyltryptophan N-methyltransferase easF from Epichloe festucae var. lolii (Neotyphodium lolii).